The following is a 131-amino-acid chain: Histone H3-like 4 (131 aa).

Position 10 is an N6,N6,N6-trimethyllysine; alternate (Lys10). Lys10 carries the N6,N6-dimethyllysine; alternate modification. The residue at position 10 (Lys10) is an N6-acetyllysine; alternate. Position 10 is an N6-methyllysine; alternate (Lys10). A Phosphothreonine modification is found at Thr12. Residue Lys15 is modified to N6-acetyllysine. At Ser27 the chain carries Phosphoserine. Lys32 carries the post-translational modification N6,N6,N6-trimethyllysine; alternate. Lys32 is subject to N6,N6-dimethyllysine; alternate. Position 32 is an N6-methyllysine; alternate (Lys32).

This sequence belongs to the histone H3 family. The nucleosome is a histone octamer containing two molecules each of H2A, H2B, H3 and H4 assembled in one H3-H4 heterotetramer and two H2A-H2B heterodimers. The octamer wraps approximately 147 bp of DNA. As to expression, expressed in roots, seedlings, leaves buds and open flowers.

Its subcellular location is the nucleus. It localises to the chromosome. Functionally, core component of nucleosome. Nucleosomes wrap and compact DNA into chromatin, limiting DNA accessibility to the cellular machineries which require DNA as a template. Histones thereby play a central role in transcription regulation, DNA repair, DNA replication and chromosomal stability. DNA accessibility is regulated via a complex set of post-translational modifications of histones, also called histone code, and nucleosome remodeling. The protein is Histone H3-like 4 of Arabidopsis thaliana (Mouse-ear cress).